The primary structure comprises 115 residues: U3-lycotoxin-Ls1r (115 aa).

The first 20 residues, 1–20 (MKFVLLFGVLLVTLFSYSSA), serve as a signal peptide directing secretion. Positions 21–44 (EMLDDFHQADEDELVSLIKKEEAR) are excised as a propeptide. 4 disulfides stabilise this stretch: cysteine 48-cysteine 63, cysteine 55-cysteine 72, cysteine 62-cysteine 87, and cysteine 74-cysteine 85.

This sequence belongs to the neurotoxin 19 (CSTX) family. 01 subfamily. In terms of tissue distribution, expressed by the venom gland.

The protein localises to the secreted. The sequence is that of U3-lycotoxin-Ls1r from Lycosa singoriensis (Wolf spider).